Consider the following 436-residue polypeptide: UPF0597 protein YhaM (436 aa).

This sequence belongs to the UPF0597 family.

This chain is UPF0597 protein YhaM, found in Escherichia coli (strain 55989 / EAEC).